A 475-amino-acid polypeptide reads, in one-letter code: Bifunctional protein HldE (475 aa).

Residues 1-321 (MADKIDISLY…RALHQITASH (321 aa)) are ribokinase. Residue 197-200 (NLKE) coordinates ATP. The active site involves Asp-266. Positions 346–475 (MTNGCFDILH…TSRLVEKMLN (130 aa)) are cytidylyltransferase.

The protein in the N-terminal section; belongs to the carbohydrate kinase PfkB family. In the C-terminal section; belongs to the cytidylyltransferase family. In terms of assembly, homodimer.

It catalyses the reaction D-glycero-beta-D-manno-heptose 7-phosphate + ATP = D-glycero-beta-D-manno-heptose 1,7-bisphosphate + ADP + H(+). It carries out the reaction D-glycero-beta-D-manno-heptose 1-phosphate + ATP + H(+) = ADP-D-glycero-beta-D-manno-heptose + diphosphate. It functions in the pathway nucleotide-sugar biosynthesis; ADP-L-glycero-beta-D-manno-heptose biosynthesis; ADP-L-glycero-beta-D-manno-heptose from D-glycero-beta-D-manno-heptose 7-phosphate: step 1/4. It participates in nucleotide-sugar biosynthesis; ADP-L-glycero-beta-D-manno-heptose biosynthesis; ADP-L-glycero-beta-D-manno-heptose from D-glycero-beta-D-manno-heptose 7-phosphate: step 3/4. Its function is as follows. Catalyzes the phosphorylation of D-glycero-D-manno-heptose 7-phosphate at the C-1 position to selectively form D-glycero-beta-D-manno-heptose-1,7-bisphosphate. Functionally, catalyzes the ADP transfer from ATP to D-glycero-beta-D-manno-heptose 1-phosphate, yielding ADP-D-glycero-beta-D-manno-heptose. This chain is Bifunctional protein HldE, found in Coxiella burnetii (strain Dugway 5J108-111).